The following is a 165-amino-acid chain: Glycine cleavage system H protein, mitochondrial (165 aa).

The region spanning 57-139 is the Lipoyl-binding domain; the sequence is NAIVGISSYA…YEKGWLFKVD (83 aa). N6-lipoyllysine is present on K98.

The protein belongs to the GcvH family. In terms of assembly, the glycine cleavage system is composed of four proteins: P, T, L and H. Requires (R)-lipoate as cofactor.

The protein resides in the mitochondrion. In terms of biological role, the glycine cleavage system catalyzes the degradation of glycine. The H protein shuttles the methylamine group of glycine from the P protein to the T protein. The chain is Glycine cleavage system H protein, mitochondrial (ppl) from Drosophila melanogaster (Fruit fly).